The primary structure comprises 659 residues: UvrABC system protein B (659 aa).

The 388-residue stretch at 25-412 (QSIENGNRGQ…SEIVAEQIIR (388 aa)) folds into the Helicase ATP-binding domain. Residue 38-45 (GVTGSGKT) participates in ATP binding. Residues 91-114 (YYDYYQPEAYVPQTDTFIEKDASI) carry the Beta-hairpin motif. A Helicase C-terminal domain is found at 429–582 (QIDDLYGEIQ…QMEYNEEHNI (154 aa)). Residues 622-657 (EKLIEQYEEEMKEAAKNLQFERAAELRDIIKDLKEN) enclose the UVR domain.

This sequence belongs to the UvrB family. As to quaternary structure, forms a heterotetramer with UvrA during the search for lesions. Interacts with UvrC in an incision complex.

The protein localises to the cytoplasm. In terms of biological role, the UvrABC repair system catalyzes the recognition and processing of DNA lesions. A damage recognition complex composed of 2 UvrA and 2 UvrB subunits scans DNA for abnormalities. Upon binding of the UvrA(2)B(2) complex to a putative damaged site, the DNA wraps around one UvrB monomer. DNA wrap is dependent on ATP binding by UvrB and probably causes local melting of the DNA helix, facilitating insertion of UvrB beta-hairpin between the DNA strands. Then UvrB probes one DNA strand for the presence of a lesion. If a lesion is found the UvrA subunits dissociate and the UvrB-DNA preincision complex is formed. This complex is subsequently bound by UvrC and the second UvrB is released. If no lesion is found, the DNA wraps around the other UvrB subunit that will check the other stand for damage. The protein is UvrABC system protein B of Clostridium perfringens (strain 13 / Type A).